A 483-amino-acid polypeptide reads, in one-letter code: Protein nucleotidyltransferase YdiU (483 aa).

Positions 100, 102, 103, 123, 135, 136, 189, and 196 each coordinate ATP. Aspartate 265 serves as the catalytic Proton acceptor. 2 residues coordinate Mg(2+): asparagine 266 and aspartate 275. Aspartate 275 contacts ATP.

The protein belongs to the SELO family. It depends on Mg(2+) as a cofactor. Mn(2+) is required as a cofactor.

It catalyses the reaction L-seryl-[protein] + ATP = 3-O-(5'-adenylyl)-L-seryl-[protein] + diphosphate. The enzyme catalyses L-threonyl-[protein] + ATP = 3-O-(5'-adenylyl)-L-threonyl-[protein] + diphosphate. The catalysed reaction is L-tyrosyl-[protein] + ATP = O-(5'-adenylyl)-L-tyrosyl-[protein] + diphosphate. It carries out the reaction L-histidyl-[protein] + UTP = N(tele)-(5'-uridylyl)-L-histidyl-[protein] + diphosphate. It catalyses the reaction L-seryl-[protein] + UTP = O-(5'-uridylyl)-L-seryl-[protein] + diphosphate. The enzyme catalyses L-tyrosyl-[protein] + UTP = O-(5'-uridylyl)-L-tyrosyl-[protein] + diphosphate. In terms of biological role, nucleotidyltransferase involved in the post-translational modification of proteins. It can catalyze the addition of adenosine monophosphate (AMP) or uridine monophosphate (UMP) to a protein, resulting in modifications known as AMPylation and UMPylation. This is Protein nucleotidyltransferase YdiU from Gloeobacter violaceus (strain ATCC 29082 / PCC 7421).